A 131-amino-acid chain; its full sequence is MEKDMAMMGDKLILRGLKFYGFHGAIPEEKTLGQMFMLDIDAWMCLKKAGLSDNLADSVSYVDIYNVAKEVVEGSSRNLLERVAGLIASKTLEISPRITAVRVKLWKPNVALIQSTIDYLGVEIFRDRATE.

Substrate-binding positions include Glu29, Tyr61, and 80–81; that span reads LE. The active-site Proton donor/acceptor is the Lys107.

The protein belongs to the DHNA family. In terms of assembly, homooctamer. Forms a hollow cylinder assembled from two ring-shaped tetramers. In terms of tissue distribution, expressed in roots, leaves, stems and siliques.

The enzyme catalyses 7,8-dihydroneopterin = 6-hydroxymethyl-7,8-dihydropterin + glycolaldehyde. It functions in the pathway cofactor biosynthesis; tetrahydrofolate biosynthesis; 2-amino-4-hydroxy-6-hydroxymethyl-7,8-dihydropteridine diphosphate from 7,8-dihydroneopterin triphosphate: step 3/4. Catalyzes the conversion of 7,8-dihydroneopterin into 6-hydroxymethyl-7,8-dihydropterin, a biosynthetic precursor of the vitamin tetrahydrofolate. Can use L-threo-dihydroneopterin and D-erythro-dihydroneopterin as substrates for the formation of 6-hydroxymethyldihydropterin, but it can also catalyze the epimerization of carbon 2' of dihydroneopterin and dihydromonapterin. The protein is Dihydroneopterin aldolase 2 of Arabidopsis thaliana (Mouse-ear cress).